Reading from the N-terminus, the 436-residue chain is AMSH-like protease (436 aa).

M1 is modified (N-acetylmethionine). Phosphoserine occurs at positions 25 and 242. The region spanning 269–397 is the MPN domain; it reads VVLSRDLCHK…IFRLTNAGML (129 aa). 7 residues coordinate Zn(2+): H347, H349, D360, H362, C402, H408, and H410. A JAMM motif motif is present at residues 347–360; that stretch reads HTHPTQTAFLSSVD.

This sequence belongs to the peptidase M67C family. Zn(2+) serves as cofactor. Ubiquitously expressed. Isoform 1 is widely expressed while isoform 2 is testis-specific.

Zinc metalloprotease that specifically cleaves 'Lys-63'-linked polyubiquitin chains. Acts as a positive regulator of the TORC1 signaling pathway by mediating 'Lys-63'-linked deubiquitination of SESN2, thereby inhibiting SESN2-interaction with the GATOR2 complex. Does not cleave 'Lys-48'-linked polyubiquitin chains. The protein is AMSH-like protease (Stambpl1) of Mus musculus (Mouse).